A 435-amino-acid chain; its full sequence is Eukaryotic peptide chain release factor subunit 1-3 (435 aa).

N-acetylalanine is present on A2.

The protein belongs to the eukaryotic release factor 1 family. As to quaternary structure, heterodimer of two subunits, one of which binds GTP.

The protein localises to the cytoplasm. In terms of biological role, directs the termination of nascent peptide synthesis (translation) in response to the termination codons UAA, UAG and UGA. Modulates plant growth and development. This Arabidopsis thaliana (Mouse-ear cress) protein is Eukaryotic peptide chain release factor subunit 1-3 (ERF1-3).